A 149-amino-acid chain; its full sequence is UPF0336 protein Lxx02810 (149 aa).

The protein belongs to the UPF0336 family.

The sequence is that of UPF0336 protein Lxx02810 from Leifsonia xyli subsp. xyli (strain CTCB07).